Here is a 317-residue protein sequence, read N- to C-terminus: N-acetylmuramoyl-L-alanine amidase XlyB (317 aa).

A signal peptide spans 1-39 (MSIPVKKNLVSEAKYALKCPNAMSAEYITIHNTANDASA). One can recognise an N-acetylmuramoyl-L-alanine amidase domain in the interval 40–142 (ANEISYMIGN…QDWSGKYCPH (103 aa)). Residues 177-221 (SEYHVKKGDTLSGIAASHGASVKTLQSINHITDPNHIKIGQVIKL) form the LysM domain.

This sequence belongs to the N-acetylmuramoyl-L-alanine amidase 2 family.

Its subcellular location is the secreted. It carries out the reaction Hydrolyzes the link between N-acetylmuramoyl residues and L-amino acid residues in certain cell-wall glycopeptides.. Autolysins are involved in some important biological processes such as cell separation, cell-wall turnover, competence for genetic transformation, formation of the flagella and sporulation. This is N-acetylmuramoyl-L-alanine amidase XlyB (xlyB) from Bacillus subtilis (strain 168).